A 204-amino-acid polypeptide reads, in one-letter code: Thymidylate kinase (204 aa).

11–18 (GIDGAGKS) lines the ATP pocket.

This sequence belongs to the thymidylate kinase family.

It catalyses the reaction dTMP + ATP = dTDP + ADP. Functionally, phosphorylation of dTMP to form dTDP in both de novo and salvage pathways of dTTP synthesis. The protein is Thymidylate kinase of Janthinobacterium sp. (strain Marseille) (Minibacterium massiliensis).